Here is a 293-residue protein sequence, read N- to C-terminus: Triosephosphate isomerase (293 aa).

25–27 (NWK) provides a ligand contact to substrate. The active-site Electrophile is the histidine 117. Glutamate 218 functions as the Proton acceptor in the catalytic mechanism.

It belongs to the triosephosphate isomerase family. Homodimer.

It is found in the cytoplasm. The catalysed reaction is D-glyceraldehyde 3-phosphate = dihydroxyacetone phosphate. The protein operates within carbohydrate biosynthesis; gluconeogenesis. It participates in carbohydrate degradation; glycolysis; D-glyceraldehyde 3-phosphate from glycerone phosphate: step 1/1. Involved in the gluconeogenesis. Catalyzes stereospecifically the conversion of dihydroxyacetone phosphate (DHAP) to D-glyceraldehyde-3-phosphate (G3P). The protein is Triosephosphate isomerase of Tropheryma whipplei (strain Twist) (Whipple's bacillus).